The chain runs to 265 residues: MNKDVSLGQPIVRYEDGKLFNTTDQYVTEFPLTIMVNGEEFATVICSPTNLEELVIGFLASEGAILKRDELKSVLIDDSKGFAHVGLNKDLGDRFQYSTKRMIASCCGKSREFYFQNDAAIAKTSMSKITLTPIQIINMMTRLQSASHIYQETGGLHNAAISDGLTFFVHRQDIGRHNALDKLYGFCIQRHITVRDKVLIFSGRISSEILIKAAKIGVGVILSKSAPTTLAVTLANDLNITAVGFIRNGGFNIYSHPERIIDSEQ.

Residue Cys107 is the Cysteine persulfide intermediate of the active site.

It belongs to the FdhD family.

The protein resides in the cytoplasm. Required for formate dehydrogenase (FDH) activity. Acts as a sulfur carrier protein that transfers sulfur from IscS to the molybdenum cofactor prior to its insertion into FDH. This Staphylococcus aureus (strain bovine RF122 / ET3-1) protein is Sulfur carrier protein FdhD.